Reading from the N-terminus, the 258-residue chain is Imidazole glycerol phosphate synthase subunit HisF (258 aa).

Residues D11 and D130 contribute to the active site.

The protein belongs to the HisA/HisF family. In terms of assembly, heterodimer of HisH and HisF.

The protein resides in the cytoplasm. The enzyme catalyses 5-[(5-phospho-1-deoxy-D-ribulos-1-ylimino)methylamino]-1-(5-phospho-beta-D-ribosyl)imidazole-4-carboxamide + L-glutamine = D-erythro-1-(imidazol-4-yl)glycerol 3-phosphate + 5-amino-1-(5-phospho-beta-D-ribosyl)imidazole-4-carboxamide + L-glutamate + H(+). It functions in the pathway amino-acid biosynthesis; L-histidine biosynthesis; L-histidine from 5-phospho-alpha-D-ribose 1-diphosphate: step 5/9. Functionally, IGPS catalyzes the conversion of PRFAR and glutamine to IGP, AICAR and glutamate. The HisF subunit catalyzes the cyclization activity that produces IGP and AICAR from PRFAR using the ammonia provided by the HisH subunit. The chain is Imidazole glycerol phosphate synthase subunit HisF from Blochmanniella floridana.